The sequence spans 80 residues: Acyl carrier protein (80 aa).

Positions 4–79 constitute a Carrier domain; that stretch reads EAILEKVRSI…DAVKYIEDKQ (76 aa). Residue serine 39 is modified to O-(pantetheine 4'-phosphoryl)serine.

The protein belongs to the acyl carrier protein (ACP) family. In terms of processing, 4'-phosphopantetheine is transferred from CoA to a specific serine of apo-ACP by AcpS. This modification is essential for activity because fatty acids are bound in thioester linkage to the sulfhydryl of the prosthetic group.

The protein localises to the cytoplasm. It functions in the pathway lipid metabolism; fatty acid biosynthesis. Its function is as follows. Carrier of the growing fatty acid chain in fatty acid biosynthesis. In Synechococcus sp. (strain CC9902), this protein is Acyl carrier protein.